Consider the following 334-residue polypeptide: DCN1-like protein 3 (334 aa).

Residues 112 to 301 form the DCUN1 domain; that stretch reads VSHQTLSKLF…LFDDFVDYEK (190 aa). The disordered stretch occupies residues 308–334; that stretch reads SGIHDDDNNNDDPLQSHVKAEDPGLVS. Residues 325–334 show a composition bias toward basic and acidic residues; it reads VKAEDPGLVS.

The protein resides in the cell membrane. Functionally, promotes neddylation of cullin components of SCF-type E3 ubiquitin ligase complexes and thus regulates SCF-type complex activity. Function promotes cell proliferation. The polypeptide is DCN1-like protein 3 (Drosophila melanogaster (Fruit fly)).